The chain runs to 452 residues: ADP-dependent glucose/glucosamine kinase (452 aa).

The ADPK domain maps to 1 to 452; sequence MSWDEMYRDA…AFVSEFSLSS (452 aa). Residues Asp-33, Glu-87, 111–112, and His-174 each bind D-glucose; that span reads GQ. Glu-264 contributes to the Mg(2+) binding site. ADP is bound at residue Asn-290. Position 293 (Glu-293) interacts with Mg(2+). Residues 339 to 340, Val-426, and Gly-436 each bind ADP; that span reads HT. Asp-437 provides a ligand contact to D-glucose. Residue Asp-437 coordinates Mg(2+). The active-site Proton acceptor is the Asp-437.

This sequence belongs to the ADP-dependent glucokinase family. Mg(2+) serves as cofactor.

Its subcellular location is the cytoplasm. The enzyme catalyses D-glucose + ADP = D-glucose 6-phosphate + AMP + H(+). It carries out the reaction D-glucosamine + ADP = D-glucosamine 6-phosphate + AMP + H(+). It functions in the pathway carbohydrate degradation; glycolysis. Functionally, catalyzes the ADP-dependent phosphorylation of D-glucose to D-glucose 6-phosphate and glucosamine to glucosamine 6-phosphate. The chain is ADP-dependent glucose/glucosamine kinase from Pyrococcus abyssi (strain GE5 / Orsay).